Reading from the N-terminus, the 263-residue chain is 3-deoxy-manno-octulosonate cytidylyltransferase (263 aa).

Belongs to the KdsB family.

The protein localises to the cytoplasm. The enzyme catalyses 3-deoxy-alpha-D-manno-oct-2-ulosonate + CTP = CMP-3-deoxy-beta-D-manno-octulosonate + diphosphate. Its pathway is nucleotide-sugar biosynthesis; CMP-3-deoxy-D-manno-octulosonate biosynthesis; CMP-3-deoxy-D-manno-octulosonate from 3-deoxy-D-manno-octulosonate and CTP: step 1/1. It functions in the pathway bacterial outer membrane biogenesis; lipopolysaccharide biosynthesis. In terms of biological role, activates KDO (a required 8-carbon sugar) for incorporation into bacterial lipopolysaccharide in Gram-negative bacteria. This Burkholderia multivorans (strain ATCC 17616 / 249) protein is 3-deoxy-manno-octulosonate cytidylyltransferase.